A 115-amino-acid polypeptide reads, in one-letter code: Large ribosomal subunit protein bL19 (115 aa).

The protein belongs to the bacterial ribosomal protein bL19 family.

In terms of biological role, this protein is located at the 30S-50S ribosomal subunit interface and may play a role in the structure and function of the aminoacyl-tRNA binding site. In Francisella tularensis subsp. tularensis (strain WY96-3418), this protein is Large ribosomal subunit protein bL19.